A 135-amino-acid chain; its full sequence is C-type lectin BPL (135 aa).

Disulfide bonds link Cys3–Cys14, Cys31–Cys131, Cys38–Cys133, and Cys106–Cys123. Residues 10 to 132 (MNGLCYKIFN…CESKNAFLCQ (123 aa)) form the C-type lectin domain. Residues Gln96, Asp98, Glu104, and Asp120 each coordinate Ca(2+). A Galactose-binding motif is present at residues 96–98 (QPD).

This sequence belongs to the true venom lectin family. Homodimer; disulfide-linked. As to expression, expressed by the venom gland.

The protein resides in the secreted. Functionally, galactose-binding protein which recognizes specific carbohydrate structures and agglutinates a variety of animal cells by binding to cell-surface glycoproteins and glycolipids. Calcium-dependent lectin. Shows high hemagglutinating activity in the presence of human erythrocytes, which are agglutinated with a minimum hemagglutination concentration (MHC) of 2.5-0.35 ug/ml. Causes indirect nephrotoxicity. Causes reductions in perfusion pressures, renal vascular resistance, urinary flow, glomerular filtration rate, sodium, potassium and chloride tubular transport. Its effects may be caused by the release of inflammatory mediators. This Bothrops pirajai (Piraja's lancehead) protein is C-type lectin BPL.